A 179-amino-acid polypeptide reads, in one-letter code: Large ribosomal subunit protein uL6 (179 aa).

It belongs to the universal ribosomal protein uL6 family. As to quaternary structure, part of the 50S ribosomal subunit.

Its function is as follows. This protein binds to the 23S rRNA, and is important in its secondary structure. It is located near the subunit interface in the base of the L7/L12 stalk, and near the tRNA binding site of the peptidyltransferase center. The polypeptide is Large ribosomal subunit protein uL6 (Clostridium perfringens (strain ATCC 13124 / DSM 756 / JCM 1290 / NCIMB 6125 / NCTC 8237 / Type A)).